The following is a 129-amino-acid chain: Fluoride-specific ion channel FluC 2 (129 aa).

Transmembrane regions (helical) follow at residues 3–23 (FLYVGIFGALGGMCRYAMNLW), 32–52 (ATLAVNLIGCFLLAFIMPFLA), 59–79 (LVLLNGIGTGFIGAFTTFSAF), and 90–110 (GEVVLAISYILVSLIGGLVMV). Na(+)-binding residues include glycine 71 and threonine 74.

This sequence belongs to the fluoride channel Fluc/FEX (TC 1.A.43) family.

Its subcellular location is the cell membrane. It carries out the reaction fluoride(in) = fluoride(out). Na(+) is not transported, but it plays an essential structural role and its presence is essential for fluoride channel function. Fluoride-specific ion channel. Important for reducing fluoride concentration in the cell, thus reducing its toxicity. In Listeria innocua serovar 6a (strain ATCC BAA-680 / CLIP 11262), this protein is Fluoride-specific ion channel FluC 2.